We begin with the raw amino-acid sequence, 227 residues long: Probable GTP-binding protein EngB (227 aa).

The region spanning 13 to 188 is the EngB-type G domain; the sequence is IGLEVAFAGR…AGVMGNWYEY (176 aa). GTP-binding positions include 21–28, 48–52, 67–70, 134–137, and 167–169; these read GRSNAGKS, GRTQM, DLPG, TKAD, and FSA. The Mg(2+) site is built by Ser28 and Thr50.

The protein belongs to the TRAFAC class TrmE-Era-EngA-EngB-Septin-like GTPase superfamily. EngB GTPase family. Requires Mg(2+) as cofactor.

In terms of biological role, necessary for normal cell division and for the maintenance of normal septation. This Psychrobacter cryohalolentis (strain ATCC BAA-1226 / DSM 17306 / VKM B-2378 / K5) protein is Probable GTP-binding protein EngB.